The following is a 339-amino-acid chain: D-alanine--D-alanine ligase (339 aa).

The 208-residue stretch at 126 to 333 (KQVLDSAGIP…YSELVTRLVE (208 aa)) folds into the ATP-grasp domain. 158–213 (AAELGYPLFVKPANLGSSVGISKVGSPEELDAALTLAFGLDRRVILEAMTPHKPRE) is an ATP binding site. 3 residues coordinate Mg(2+): Asp-286, Glu-300, and Asn-302.

It belongs to the D-alanine--D-alanine ligase family. Requires Mg(2+) as cofactor. It depends on Mn(2+) as a cofactor.

The protein resides in the cytoplasm. The catalysed reaction is 2 D-alanine + ATP = D-alanyl-D-alanine + ADP + phosphate + H(+). Its pathway is cell wall biogenesis; peptidoglycan biosynthesis. Functionally, cell wall formation. The polypeptide is D-alanine--D-alanine ligase (Deinococcus radiodurans (strain ATCC 13939 / DSM 20539 / JCM 16871 / CCUG 27074 / LMG 4051 / NBRC 15346 / NCIMB 9279 / VKM B-1422 / R1)).